We begin with the raw amino-acid sequence, 331 residues long: 3-dehydrosphinganine reductase TSC10B (331 aa).

Residues 1–7 are Lumenal-facing; that stretch reads MAAIFSL. Residues 8–28 traverse the membrane as a helical segment; the sequence is FLFFILFIVSLLIILSFIVRP. The Cytoplasmic portion of the chain corresponds to 29–262; that stretch reads RSVTIPIKFR…ICFDGIKAGK (234 aa). Glycine 44, serine 46, serine 47, glycine 48, arginine 69, lysine 73, and aspartate 95 together coordinate NADPH. Positions 44–48 match the GXSXG motif; the sequence is GGSSG. Residue serine 172 is the Proton donor of the active site. Catalysis depends on tyrosine 186, which acts as the Proton acceptor. NADP(+)-binding residues include tyrosine 186 and lysine 190. The active-site Lowers pKa of active site Tyr is lysine 190. The helical transmembrane segment at 263 to 283 threads the bilayer; sequence FTVTCHFIGFLLSIASTGMSP. The Lumenal segment spans residues 284–286; the sequence is QGS. Residues 287–307 traverse the membrane as a helical segment; sequence FWLALTEVMFGGLIRLASLVF. Over 308–331 the chain is Cytoplasmic; it reads QWQWYKTIEKWSQRNKKEVNSKLA.

Belongs to the short-chain dehydrogenases/reductases (SDR) family. As to expression, expressed in roots, leaves, stems and flowers.

It localises to the endoplasmic reticulum membrane. The enzyme catalyses sphinganine + NADP(+) = 3-oxosphinganine + NADPH + H(+). The protein operates within lipid metabolism; sphingolipid metabolism. Its function is as follows. Catalyzes the reduction of 3'-oxosphinganine (3-ketodihydrosphingosine/KDS) to sphinganine (dihydrosphingosine/DHS), the second step of de novo sphingolipid biosynthesis. In plants, sphingolipids seems to play a critical role in mineral ion homeostasis, most likely through their involvement in the ion transport functionalities of membrane systems in the root. Is stereospecific for D-erythro-DHS production and does not produce L-threo-DHS. This is 3-dehydrosphinganine reductase TSC10B (TSC10B) from Arabidopsis thaliana (Mouse-ear cress).